Consider the following 422-residue polypeptide: MSDLLTGIKNYQQMFWQNPNKLSADEALARINFSFDDIFEAQKRLQRFAPLIKKLFPETENGIIESPLAEIPRMKQEIEKLYGGKIHGRLFLKCDNYLKVAGSIKARGGIYEVLKHAETLLLENGLITLEDDYSKIAEERFKKFFSNYKVAVGSTGNLGLSIGIMAAALGFKVDVHMSHDAKEWKKKILRDRGVNVIEYREDYSKAVEEGRKKAAAEKNTYFIDDENSRDLFLGYSVAALRLKDQLTELGIEVNKENPLFVYLPCGVGGAPGGISFGLKTIFKDDVYCYFVEPTHSPCMLLGLVTQKFSAIHVRDFGLDNITEADGLAVGSPSKLVAEIANILIDGIYTIEDEELFKLLALLKDSENIKVEPSAAASLKGPLLVNSRANAIHISWATGGIFIPEEIYREMYMRGKSYLKDVY.

At K105 the chain carries N6-(pyridoxal phosphate)lysine.

It belongs to the serine/threonine dehydratase family. DsdA subfamily. Requires pyridoxal 5'-phosphate as cofactor.

It catalyses the reaction D-serine = pyruvate + NH4(+). This chain is Probable D-serine dehydratase, found in Carboxydothermus hydrogenoformans (strain ATCC BAA-161 / DSM 6008 / Z-2901).